A 2389-amino-acid chain; its full sequence is Highly reducing polyketide synthase Dhc3 (2389 aa).

One can recognise a Ketosynthase family 3 (KS3) domain in the interval 9-433 (DVPIAVVGLA…GTNGHAVLES (425 aa)). Catalysis depends on for beta-ketoacyl synthase activity residues Cys181, His316, and His356. The segment at 551–861 (FVFTGQGAQW…LSGPVEQILN (311 aa)) is malonyl-CoA:ACP transacylase (MAT) domain. The active-site For malonyltransferase activity is the Ser641. The N-terminal hotdog fold stretch occupies residues 944–1079 (RSLIGAQVPM…GLITIDYADT (136 aa)). The region spanning 944-1263 (RSLIGAQVPM…VSELENDTEA (320 aa)) is the PKS/mFAS DH domain. Residues 946 to 1262 (LIGAQVPMMD…RVSELENDTE (317 aa)) are dehydratase (DH) domain. Catalysis depends on His976, which acts as the Proton acceptor; for dehydratase activity. The tract at residues 1107–1263 (PDICSKEDFY…VSELENDTEA (157 aa)) is C-terminal hotdog fold. Asp1173 serves as the catalytic Proton donor; for dehydratase activity. Residues 1673–1987 (GLLDTLAFIE…QGKHRGKLVL (315 aa)) form an enoylreductase (ER) domain region. Residues 2011-2191 (ATYLFVGGLG…VAVDLGIMRD (181 aa)) form a catalytic ketoreductase (KRc) domain region. The 78-residue stretch at 2302 to 2379 (EAVSIITDAL…EFAEKIAEKS (78 aa)) folds into the Carrier domain. Ser2339 is subject to O-(pantetheine 4'-phosphoryl)serine.

The protein operates within mycotoxin biosynthesis. In terms of biological role, highly reducing polyketide synthase; part of the gene cluster that mediates the biosynthesis of 10,11-dehydrocurvularin, a prevalent fungal phytotoxin with heat shock response and immune-modulatory activities. The highly reducing polyketide synthase Dhc3 is responsible for biosynthesis up to the tetraketide stage. The non-reducing polyketide synthase Dhc5 then conducts four additional chain extension cycles, producing the unreduced part of the nascent octaketide from C-1 to C-8 in 10,11-dehydrocurvularin. The polypeptide is Highly reducing polyketide synthase Dhc3 (Dhc3) (Alternaria cinerariae).